Reading from the N-terminus, the 217-residue chain is Ras-related protein Rab-19 (217 aa).

Residues Ser26, Val28, Gly29, Lys30, Thr31, Cys32, Tyr42, Glu44, and Thr49 each coordinate GTP. Thr31 contributes to the Mg(2+) binding site. The Switch 1 signature appears at 39–54 (SGVYMEAQQNTIGVDF). Residues Thr49 and Asp72 each coordinate Mg(2+). Residues 74–89 (AGQERFRTITQSYYRS) carry the Switch 2 motif. GTP contacts are provided by Gly75, Asn130, Lys131, Asp133, Ser161, Ala162, and Lys163. 2 S-geranylgeranyl cysteine lipidation sites follow: Cys215 and Cys217. At Cys217 the chain carries Cysteine methyl ester.

This sequence belongs to the small GTPase superfamily. Rab family. Requires Mg(2+) as cofactor.

It localises to the cell membrane. The enzyme catalyses GTP + H2O = GDP + phosphate + H(+). Regulated by guanine nucleotide exchange factors (GEFs) which promote the exchange of bound GDP for free GTP. Regulated by GTPase activating proteins (GAPs) which increase the GTP hydrolysis activity. Inhibited by GDP dissociation inhibitors (GDIs). The small GTPases Rab are key regulators of intracellular membrane trafficking, from the formation of transport vesicles to their fusion with membranes. Rabs cycle between an inactive GDP-bound form and an active GTP-bound form that is able to recruit to membranes different set of downstream effectors directly responsible for vesicle formation, movement, tethering and fusion. This Bos taurus (Bovine) protein is Ras-related protein Rab-19 (RAB19).